Consider the following 171-residue polypeptide: UPF0260 protein Nham_1404 (171 aa).

Belongs to the UPF0260 family.

The sequence is that of UPF0260 protein Nham_1404 from Nitrobacter hamburgensis (strain DSM 10229 / NCIMB 13809 / X14).